A 565-amino-acid polypeptide reads, in one-letter code: NAD-dependent malic enzyme (565 aa).

The active-site Proton donor is Tyr104. Arg157 lines the NAD(+) pocket. Lys175 (proton acceptor) is an active-site residue. Residues Glu246, Asp247, and Asp270 each contribute to the a divalent metal cation site. The NAD(+) site is built by Asp270 and Asn418.

This sequence belongs to the malic enzymes family. Homotetramer. Mg(2+) serves as cofactor. The cofactor is Mn(2+).

The enzyme catalyses (S)-malate + NAD(+) = pyruvate + CO2 + NADH. It carries out the reaction oxaloacetate + H(+) = pyruvate + CO2. This chain is NAD-dependent malic enzyme, found in Salmonella choleraesuis (strain SC-B67).